The following is a 261-amino-acid chain: Cytochrome c oxidase subunit 3 (261 aa).

The Mitochondrial matrix portion of the chain corresponds to 1–15; the sequence is MTHQTHAYHMVNPSP. Residues 16 to 34 form a helical membrane-spanning segment; that stretch reads WPLTGALSALLMTSGLIMW. Topologically, residues 35 to 40 are mitochondrial intermembrane; that stretch reads FHFNSM. Residues 41–66 traverse the membrane as a helical segment; that stretch reads TLLMLGLTTNMLTMYQWWRDIIREST. The Mitochondrial matrix segment spans residues 67–72; that stretch reads FQGHHT. The helical transmembrane segment at 73–105 threads the bilayer; sequence SAVQKGLRYGMILFIISEVLFFTGFFWAFYHSS. Topologically, residues 106-128 are mitochondrial intermembrane; it reads LAPTPELGGCWPPTGIHPLNPLE. Residues 129–152 form a helical membrane-spanning segment; sequence VPLLNTSVLLASGVSITWAHHSLM. Over 153–155 the chain is Mitochondrial matrix; it reads EGN. Residues 156–183 form a helical membrane-spanning segment; it reads RNHMLQALFITIALGVYFTLLQASEYYE. Residues 184–190 lie on the Mitochondrial intermembrane side of the membrane; the sequence is APFTISD. A helical transmembrane segment spans residues 191–223; that stretch reads GVYGSTFFVATGFHGLHVIIGSTFLIVCFFRQL. The Mitochondrial matrix segment spans residues 224–232; it reads KFHFTSTHH. The chain crosses the membrane as a helical span at residues 233–256; the sequence is FGFEAAAWYWHFVDVVWLFLYVSI. The Mitochondrial intermembrane portion of the chain corresponds to 257-261; the sequence is YWWGS.

This sequence belongs to the cytochrome c oxidase subunit 3 family. As to quaternary structure, component of the cytochrome c oxidase (complex IV, CIV), a multisubunit enzyme composed of 14 subunits. The complex is composed of a catalytic core of 3 subunits MT-CO1, MT-CO2 and MT-CO3, encoded in the mitochondrial DNA, and 11 supernumerary subunits COX4I, COX5A, COX5B, COX6A, COX6B, COX6C, COX7A, COX7B, COX7C, COX8 and NDUFA4, which are encoded in the nuclear genome. The complex exists as a monomer or a dimer and forms supercomplexes (SCs) in the inner mitochondrial membrane with NADH-ubiquinone oxidoreductase (complex I, CI) and ubiquinol-cytochrome c oxidoreductase (cytochrome b-c1 complex, complex III, CIII), resulting in different assemblies (supercomplex SCI(1)III(2)IV(1) and megacomplex MCI(2)III(2)IV(2)).

The protein resides in the mitochondrion inner membrane. It carries out the reaction 4 Fe(II)-[cytochrome c] + O2 + 8 H(+)(in) = 4 Fe(III)-[cytochrome c] + 2 H2O + 4 H(+)(out). Its function is as follows. Component of the cytochrome c oxidase, the last enzyme in the mitochondrial electron transport chain which drives oxidative phosphorylation. The respiratory chain contains 3 multisubunit complexes succinate dehydrogenase (complex II, CII), ubiquinol-cytochrome c oxidoreductase (cytochrome b-c1 complex, complex III, CIII) and cytochrome c oxidase (complex IV, CIV), that cooperate to transfer electrons derived from NADH and succinate to molecular oxygen, creating an electrochemical gradient over the inner membrane that drives transmembrane transport and the ATP synthase. Cytochrome c oxidase is the component of the respiratory chain that catalyzes the reduction of oxygen to water. Electrons originating from reduced cytochrome c in the intermembrane space (IMS) are transferred via the dinuclear copper A center (CU(A)) of subunit 2 and heme A of subunit 1 to the active site in subunit 1, a binuclear center (BNC) formed by heme A3 and copper B (CU(B)). The BNC reduces molecular oxygen to 2 water molecules using 4 electrons from cytochrome c in the IMS and 4 protons from the mitochondrial matrix. The polypeptide is Cytochrome c oxidase subunit 3 (MT-CO3) (Damaliscus lunatus (Tsessebe)).